Reading from the N-terminus, the 186-residue chain is Translation initiation factor IF-3 (186 aa).

Belongs to the IF-3 family. Monomer.

It localises to the cytoplasm. Its function is as follows. IF-3 binds to the 30S ribosomal subunit and shifts the equilibrium between 70S ribosomes and their 50S and 30S subunits in favor of the free subunits, thus enhancing the availability of 30S subunits on which protein synthesis initiation begins. The sequence is that of Translation initiation factor IF-3 from Borreliella afzelii (strain PKo) (Borrelia afzelii).